The primary structure comprises 158 residues: 2-C-methyl-D-erythritol 2,4-cyclodiphosphate synthase (158 aa).

Positions 9 and 11 each coordinate a divalent metal cation. 4-CDP-2-C-methyl-D-erythritol 2-phosphate-binding positions include 9–11 and 35–36; these read DVH and HS. His-43 lines the a divalent metal cation pocket. Residues 57–59, 62–66, 133–136, Phe-140, and Arg-143 each bind 4-CDP-2-C-methyl-D-erythritol 2-phosphate; these read DIG, FPDTD, and TTSE.

This sequence belongs to the IspF family. As to quaternary structure, homotrimer. Requires a divalent metal cation as cofactor.

The catalysed reaction is 4-CDP-2-C-methyl-D-erythritol 2-phosphate = 2-C-methyl-D-erythritol 2,4-cyclic diphosphate + CMP. It participates in isoprenoid biosynthesis; isopentenyl diphosphate biosynthesis via DXP pathway; isopentenyl diphosphate from 1-deoxy-D-xylulose 5-phosphate: step 4/6. In terms of biological role, involved in the biosynthesis of isopentenyl diphosphate (IPP) and dimethylallyl diphosphate (DMAPP), two major building blocks of isoprenoid compounds. Catalyzes the conversion of 4-diphosphocytidyl-2-C-methyl-D-erythritol 2-phosphate (CDP-ME2P) to 2-C-methyl-D-erythritol 2,4-cyclodiphosphate (ME-CPP) with a corresponding release of cytidine 5-monophosphate (CMP). This chain is 2-C-methyl-D-erythritol 2,4-cyclodiphosphate synthase, found in Pasteurella multocida (strain Pm70).